The chain runs to 1152 residues: Nardilysin (1152 aa).

Residues 1 to 20 (MLRKVTVAAVCATRRKLCEA) form the signal peptide. 2 disordered regions span residues 81–108 (LGAD…KSPS) and 133–208 (MEGK…KKTT). Phosphoserine occurs at positions 86, 94, and 96. Positions 141–198 (TDDEEEEEVEEEEEDDDEDSGAEIEDDDEEGFDDEDEFDDEHDDDLDTEDNELEELEE) are enriched in acidic residues. His-234 is a binding site for Zn(2+). The Proton acceptor role is filled by Glu-237. His-238 and Glu-315 together coordinate Zn(2+).

Belongs to the peptidase M16 family. Interacts with BACE1 and NRG1. Zn(2+) serves as cofactor.

The protein localises to the mitochondrion. Its subcellular location is the cell projection. It is found in the dendrite. It carries out the reaction Hydrolysis of polypeptides, preferably at -Xaa-|-Arg-Lys-, and less commonly at -Arg-|-Arg-Xaa-, in which Xaa is not Arg or Lys.. Functionally, cleaves peptide substrates on the N-terminus of arginine residues in dibasic pairs. Is a critical activator of BACE1- and ADAM17-mediated pro-neuregulin ectodomain shedding, involved in the positive regulation of axonal maturation and myelination. Required for proper functioning of 2-oxoglutarate dehydrogenase (OGDH). This is Nardilysin from Pongo abelii (Sumatran orangutan).